Here is a 493-residue protein sequence, read N- to C-terminus: Cysteine--tRNA ligase (493 aa).

Cysteine 29 contacts Zn(2+). The short motif at alanine 31–histidine 41 is the 'HIGH' region element. 3 residues coordinate Zn(2+): cysteine 214, histidine 239, and glutamate 243. The 'KMSKS' region motif lies at lysine 270–serine 274. Lysine 273 is a binding site for ATP.

Belongs to the class-I aminoacyl-tRNA synthetase family. As to quaternary structure, monomer. The cofactor is Zn(2+).

It is found in the cytoplasm. The enzyme catalyses tRNA(Cys) + L-cysteine + ATP = L-cysteinyl-tRNA(Cys) + AMP + diphosphate. This chain is Cysteine--tRNA ligase, found in Renibacterium salmoninarum (strain ATCC 33209 / DSM 20767 / JCM 11484 / NBRC 15589 / NCIMB 2235).